Consider the following 320-residue polypeptide: Ribose-phosphate pyrophosphokinase 3 (320 aa).

Positions 131, 133, 142, and 146 each coordinate Mg(2+).

The protein belongs to the ribose-phosphate pyrophosphokinase family.

It is found in the cytoplasm. The catalysed reaction is D-ribose 5-phosphate + ATP = 5-phospho-alpha-D-ribose 1-diphosphate + AMP + H(+). It participates in metabolic intermediate biosynthesis; 5-phospho-alpha-D-ribose 1-diphosphate biosynthesis; 5-phospho-alpha-D-ribose 1-diphosphate from D-ribose 5-phosphate (route I): step 1/1. Functionally, 5-phosphoribose 1-diphosphate synthase involved in nucleotide, histidine, and tryptophan biosynthesis. Active in heteromultimeric complexes with other 5-phosphoribose 1-diphosphate synthases (PRS2, PRS3, PRS4 and PRS5). The protein is Ribose-phosphate pyrophosphokinase 3 (PRS3) of Saccharomyces cerevisiae (strain ATCC 204508 / S288c) (Baker's yeast).